The following is a 215-amino-acid chain: Large ribosomal subunit protein uL4 (215 aa).

The disordered stretch occupies residues 51–88 (KGMGEVSGTTKKPYRQKGTGNARQGSLRAPQFRTGGAV).

This sequence belongs to the universal ribosomal protein uL4 family. As to quaternary structure, part of the 50S ribosomal subunit.

Functionally, one of the primary rRNA binding proteins, this protein initially binds near the 5'-end of the 23S rRNA. It is important during the early stages of 50S assembly. It makes multiple contacts with different domains of the 23S rRNA in the assembled 50S subunit and ribosome. In terms of biological role, forms part of the polypeptide exit tunnel. The polypeptide is Large ribosomal subunit protein uL4 (Granulibacter bethesdensis (strain ATCC BAA-1260 / CGDNIH1)).